We begin with the raw amino-acid sequence, 689 residues long: MTNKPSRYTITSALPYANGPVHIGHLAGVYVPADIYARFLRSKGENVLFIGGSDEHGVPITIRAKKEGVTPQQVVDKYHVQIKQSFEELGISFDIYSRTSSKIHAETSSEYFKKLYEDGKFIEQTSEQYYDPKAEQFLADRYIIGTCPKCGNENAYGDQCEKCGSTLSPSELINPRSTLSGEKPVMKSTKHWFLPLDQYEPWLKQWILEDHKNWKTNVYGQCKSWLDQGLQPRAVTRDLDWGVPVPVAGAEGKVLYVWFDAPIGYISAAKDYFKNSEIKAVHKNNTWEDFWKKDDTKLVHFIGKDNIVFHCIIFPAMLKAEGSYILPDNVPANEFMNLEGDKISTSRNWAVWLHEYLEEFKGKQDVLRYALCANAPETKDNDFTWRDFQARNNNELVAIYGNFVNRALVLTHKYYDSVIPALGKLEASDEGVIMMLKEFPAKIAASIEQYRFREALGFMMDLARLGNKYLADTEPWKIYKENPERVKTILHIGLQIAANLAIVSEPFIPFTSAKLFTMLNLKANTWNNAGTIDLLKAGDQLGTAELLFDKIEDATIEAQVKKLEDTKQANLLANAEVKPLKENVSFDDFAKMDIRVATIIAAEKVAKTKKLLKLTLKTGIDERTVVSGIAEHFEPEAIIGQQVSLLANLAPREIKGIVSQGMILMAEDADGSLKFVQPAAVVNAGSMIG.

The 'HIGH' region signature appears at 15–25 (PYANGPVHIGH). Zn(2+) contacts are provided by C147, C150, C160, and C163. The 'KMSKS' region signature appears at 342–346 (KISTS). ATP is bound at residue T345. Residues 588–689 (DFAKMDIRVA…AVVNAGSMIG (102 aa)) enclose the tRNA-binding domain.

It belongs to the class-I aminoacyl-tRNA synthetase family. MetG type 1 subfamily. Homodimer. It depends on Zn(2+) as a cofactor.

It localises to the cytoplasm. It carries out the reaction tRNA(Met) + L-methionine + ATP = L-methionyl-tRNA(Met) + AMP + diphosphate. Functionally, is required not only for elongation of protein synthesis but also for the initiation of all mRNA translation through initiator tRNA(fMet) aminoacylation. This is Methionine--tRNA ligase from Cytophaga hutchinsonii (strain ATCC 33406 / DSM 1761 / CIP 103989 / NBRC 15051 / NCIMB 9469 / D465).